We begin with the raw amino-acid sequence, 694 residues long: Elongation factor G (694 aa).

Positions 8 to 287 constitute a tr-type G domain; sequence EDYRNFGIMA…AVVEFLPAPT (280 aa). GTP-binding positions include 17 to 24, 86 to 90, and 140 to 143; these read AHIDAGKT, DTPGH, and NKMD.

Belongs to the TRAFAC class translation factor GTPase superfamily. Classic translation factor GTPase family. EF-G/EF-2 subfamily.

The protein resides in the cytoplasm. Functionally, catalyzes the GTP-dependent ribosomal translocation step during translation elongation. During this step, the ribosome changes from the pre-translocational (PRE) to the post-translocational (POST) state as the newly formed A-site-bound peptidyl-tRNA and P-site-bound deacylated tRNA move to the P and E sites, respectively. Catalyzes the coordinated movement of the two tRNA molecules, the mRNA and conformational changes in the ribosome. This chain is Elongation factor G, found in Brucella melitensis biotype 1 (strain ATCC 23456 / CCUG 17765 / NCTC 10094 / 16M).